The following is a 28-amino-acid chain: MKLRKILKSMFNNYCKTFKDVPPGNMFR.

It localises to the cell inner membrane. This is an uncharacterized protein from Escherichia coli (strain K12).